The chain runs to 784 residues: Cation/H(+) antiporter 26 (784 aa).

11 helical membrane-spanning segments follow: residues proline 38–leucine 58, leucine 61–leucine 81, tyrosine 97–alanine 117, leucine 130–cysteine 150, leucine 201–isoleucine 221, phenylalanine 240–isoleucine 260, threonine 286–valine 306, isoleucine 321–valine 341, isoleucine 351–leucine 371, phenylalanine 376–tyrosine 396, and glutamate 413–valine 433.

It belongs to the monovalent cation:proton antiporter 2 (CPA2) transporter (TC 2.A.37) family. CHX (TC 2.A.37.4) subfamily. As to expression, expressed in pollen.

Its subcellular location is the membrane. May operate as a cation/H(+) antiporter. This chain is Cation/H(+) antiporter 26 (CHX26), found in Arabidopsis thaliana (Mouse-ear cress).